The sequence spans 260 residues: Winged helix repair factor 1 (260 aa).

Winged helix domain regions lie at residues 38 to 110 (FTED…MVVM), 126 to 185 (SRAT…LAVP), and 186 to 260 (GAGR…ISET).

It belongs to the STK19 family. Monomer in solution. Homodimer; when bound to DNA. Component of a transcription-coupled nucleotide excision repair (TC-NER) complex which assembles and interacts with the multiprotein RNA polymerase II complex when it stalls at DNA lesions.

Its subcellular location is the nucleus. In terms of biological role, DNA-binding protein which is required for efficient transcription-coupled nucleotide excision repair (TC-NER). Acts as part of a TC-NER complex which assembles and interacts with RNA polymerase II (RNAPII) when it stalls at DNA lesions. The sequence is that of Winged helix repair factor 1 from Xenopus laevis (African clawed frog).